The following is a 310-amino-acid chain: Apolipoprotein E (310 aa).

Positions 1–18 (MKVLWPALVVTLLAGCRA) are cleaved as a signal peptide. 8 consecutive repeat copies span residues 77-98 (ALMD…EQLG), 99-120 (PVAE…ARLG), 121-142 (ADME…AMVG), 143-164 (QSTE…KRLL), 165-186 (RDAE…EGAE), 187-208 (RSVN…TMHT), 209-226 (LVSK…QRLR), and 227-248 (GRLE…EQVQ). The 8 X 22 AA approximate tandem repeats stretch occupies residues 77–248 (ALMDDTMKEV…RLDEVREQVQ (172 aa)). Residues 155–165 (HLRKLRKRLLR) are LDL and other lipoprotein receptors binding. 159–162 (LRKR) serves as a coordination point for heparin. The interval 207 to 283 (HTLVSKPLQE…SWFEPLVQDM (77 aa)) is lipid-binding and lipoprotein association. A heparin-binding site is contributed by 222 to 229 (AQRLRGRL). A homooligomerization region spans residues 259–310 (NQVRLQAEAFQGRLKSWFEPLVQDMQQKWAELVEKVQLALRAVPTSVPSEKQ). Residues 271 to 283 (RLKSWFEPLVQDM) form a specificity for association with VLDL region.

It belongs to the apolipoprotein A1/A4/E family. Homotetramer. May interact with ABCA1; functionally associated with ABCA1 in the biogenesis of HDLs. May interact with APP/A4 amyloid-beta peptide; the interaction is extremely stable in vitro but its physiological significance is unclear. May interact with MAPT. May interact with MAP2. In the cerebrospinal fluid, interacts with secreted SORL1. Interacts with PMEL; this allows the loading of PMEL luminal fragment on ILVs to induce fibril nucleation. In terms of processing, APOE exists as multiple glycosylated and sialylated glycoforms within cells and in plasma. The extent of glycosylation and sialylation are tissue and context specific. Glycated in plasma VLDL. Post-translationally, phosphorylated by FAM20C in the extracellular medium.

It is found in the secreted. The protein localises to the extracellular space. Its subcellular location is the extracellular matrix. The protein resides in the extracellular vesicle. It localises to the endosome. It is found in the multivesicular body. In terms of biological role, APOE is an apolipoprotein, a protein associating with lipid particles, that mainly functions in lipoprotein-mediated lipid transport between organs via the plasma and interstitial fluids. APOE is a core component of plasma lipoproteins and is involved in their production, conversion and clearance. Apolipoproteins are amphipathic molecules that interact both with lipids of the lipoprotein particle core and the aqueous environment of the plasma. As such, APOE associates with chylomicrons, chylomicron remnants, very low density lipoproteins (VLDL) and intermediate density lipoproteins (IDL) but shows a preferential binding to high-density lipoproteins (HDL). It also binds a wide range of cellular receptors including the LDL receptor/LDLR and the very low-density lipoprotein receptor/VLDLR that mediate the cellular uptake of the APOE-containing lipoprotein particles. Finally, APOE also has a heparin-binding activity and binds heparan-sulfate proteoglycans on the surface of cells, a property that supports the capture and the receptor-mediated uptake of APOE-containing lipoproteins by cells. The sequence is that of Apolipoprotein E (APOE) from Dicerorhinus sumatrensis harrissoni (Bornean rhinoceros).